Here is a 548-residue protein sequence, read N- to C-terminus: Chaperonin GroEL (548 aa).

ATP contacts are provided by residues 30–33, Lys-51, 87–91, Gly-415, 479–481, and Asp-495; these read TLGP, DGTTT, and NAA.

This sequence belongs to the chaperonin (HSP60) family. Forms a cylinder of 14 subunits composed of two heptameric rings stacked back-to-back. Interacts with the co-chaperonin GroES.

The protein localises to the cytoplasm. It carries out the reaction ATP + H2O + a folded polypeptide = ADP + phosphate + an unfolded polypeptide.. In terms of biological role, together with its co-chaperonin GroES, plays an essential role in assisting protein folding. The GroEL-GroES system forms a nano-cage that allows encapsulation of the non-native substrate proteins and provides a physical environment optimized to promote and accelerate protein folding. This Serratia proteamaculans (strain 568) protein is Chaperonin GroEL.